Reading from the N-terminus, the 341-residue chain is Ribosomal RNA small subunit methyltransferase H (341 aa).

S-adenosyl-L-methionine-binding positions include 47-49 (GGY), Asp-64, Phe-91, Asp-109, and Gln-116.

The protein belongs to the methyltransferase superfamily. RsmH family.

The protein localises to the cytoplasm. The catalysed reaction is cytidine(1402) in 16S rRNA + S-adenosyl-L-methionine = N(4)-methylcytidine(1402) in 16S rRNA + S-adenosyl-L-homocysteine + H(+). Its function is as follows. Specifically methylates the N4 position of cytidine in position 1402 (C1402) of 16S rRNA. This is Ribosomal RNA small subunit methyltransferase H from Agrobacterium fabrum (strain C58 / ATCC 33970) (Agrobacterium tumefaciens (strain C58)).